Reading from the N-terminus, the 380-residue chain is MEINTDKYKNITRNLEREMINLNPIQRGGIIPTESKKIIYEYWDGYSVCDYCSGRLDKIETPPINEFLEDMSKFLGMDITRPTHGARESKYAVMNSVCKEGDYVVLDGNAHYTSYVALERAKLNYEKTDIEEYPTFRVIPESYAEKIDMLEDSKKNIGLILLTHVDGNYGNVADVKKVGKIAKSKGYPFLLNCAYSAGRMPIDGKKLNVDFIAASGHKSMAASGPCGLLSINKSYEDEVLETSKVNAVKELQMLGCTSRGIPILSLMASFEHLIERVKQWDLEVEKTRKVVNELEPLGFNQIGEKPRNHDIIRFETPILDEIAEKDKRRGFFFYEELKKRGIGGIRRGVTKEFKMSVYGLTNSQVDYVINSMKSIINELR.

Pyridoxal 5'-phosphate-binding positions include Ala-86 to Arg-87, Asn-192, and Ser-215 to His-217. Residue Lys-218 is modified to N6-(pyridoxal phosphate)lysine.

The protein belongs to the SepCysS family. Homodimer. Interacts with SepRS. Pyridoxal 5'-phosphate serves as cofactor.

The catalysed reaction is O-phospho-L-seryl-tRNA(Cys) + hydrogen sulfide + H(+) = L-cysteinyl-tRNA(Cys) + phosphate. Functionally, converts O-phospho-L-seryl-tRNA(Cys) (Sep-tRNA(Cys)) to L-cysteinyl-tRNA(Cys) (Cys-tRNA(Cys)). The polypeptide is O-phospho-L-seryl-tRNA:Cys-tRNA synthase (Methanococcus maripaludis (strain C6 / ATCC BAA-1332)).